Reading from the N-terminus, the 266-residue chain is Zinc transporter ZupT (266 aa).

The next 8 membrane-spanning stretches (helical) occupy residues 8 to 28 (LALTLLAGISTGIGSLLALMV), 35 to 55 (FLTFALGFSAGIMLYVSFVEI), 70 to 90 (HAAGWITTAAFFGGMLFIWLI), 123 to 143 (GIFTAAAIAIHNFPEGLAVFF), 152 to 172 (GVVIAATIALHNIPEGMAVAV), 185 to 205 (FSYSFLSGLAEPLGAIIGYAL), 209 to 229 (FLSPLVFACVLGGVAGIMVYI), and 246 to 266 (IAISGLILGMGVMAVSLLMLA). 2 residues coordinate Fe(2+): asparagine 134 and glutamate 137. Zn(2+) contacts are provided by glutamate 137 and histidine 162. Residues asparagine 163, glutamate 166, and glutamate 195 each contribute to the Fe(2+) site. A Zn(2+)-binding site is contributed by glutamate 166.

Belongs to the ZIP transporter (TC 2.A.5) family. ZupT subfamily.

The protein localises to the cell inner membrane. The catalysed reaction is Zn(2+)(in) = Zn(2+)(out). Mediates zinc uptake. May also transport other divalent cations. In Chlorobium limicola (strain DSM 245 / NBRC 103803 / 6330), this protein is Zinc transporter ZupT.